A 360-amino-acid polypeptide reads, in one-letter code: Plastid lipid-associated protein 3, chloroplastic (360 aa).

Over residues 1–37 (MATLFTVTTTSRPFPANPSKTFSPSISLKPNALSFSL) the composition is skewed to polar residues. The N-terminal 52 residues, 1-52 (MATLFTVTTTSRPFPANPSKTFSPSISLKPNALSFSLTHHRPPRPLRFSKIR), are a transit peptide targeting the chloroplast. The disordered stretch occupies residues 1–130 (MATLFTVTTT…EWEEREADDG (130 aa)). A compositionally biased stretch (basic residues) spans 38 to 50 (THHRPPRPLRFSK). Positions 53 to 68 (SSLPSESDSEPEGGYS) are enriched in low complexity. The segment covering 117 to 127 (TNEDEWEEREA) has biased composition (acidic residues).

Belongs to the PAP/fibrillin family. In terms of tissue distribution, ubiquitous expression among various organs, but only at a very low level.

It is found in the plastid. The protein resides in the chloroplast. The sequence is that of Plastid lipid-associated protein 3, chloroplastic (PAP3) from Brassica campestris (Field mustard).